Reading from the N-terminus, the 595-residue chain is MRTHYCGQVNSNNIEETVNLCGWVDRRRDHGGVIFLDLRDRSGLIQIVSDPERTPDSYQIAGDIRNEYVVQITGRVSRRPEESLNPKLPTGEIEIYADDIQLLNGLGKQLPFQVSTAETEAVREELRLKYRYLDLRRERMTRNLLLRHEVIKAIRRFLEDEQNFVEIETPILTRSTPEGARDYLVPSRVHPGEWFALPQSPQLFKQILMVSGFDRYYQIARCFRDEDLRADRQPEFTQLDMEMSFMSQEEILQLNEKLVAYIFQKVKGIDLPLPFPRLTYTEAMERYGSDKPDVRFGLELVDVSDLMKDSGFKVFSGAIAKGGIVKVLPIPGGNDAISNVRIKPGGDLFKEASEVGAKGLAYVRVKEGGKIDTIGAIKDNLTDEQKQELLKRTNAQPGHLLLFAADDANTVNKTLDRLRLVIGEQLGLIDQDKISLLWVTDFPMFEWNEDEQRLEALHHPFTAPHPDDINDLKTARAQAYDLVFNGYEVGGGSLRIYQRDVQEKVFEAIGLSAQEADNKFGFLLEAFEYGTPPHGGIAYGLDRLVMLLAVEESIRDVIAFPKTQQAKCLLANAPSEVDKKQLKELHVSSISKAKS.

L-aspartate is bound at residue glutamate 178. The tract at residues 202-205 (QLFK) is aspartate. Arginine 224 is a binding site for L-aspartate. Residues 224-226 (RDE) and glutamine 233 each bind ATP. Histidine 458 is a binding site for L-aspartate. Glutamate 488 contributes to the ATP binding site. Arginine 495 is a binding site for L-aspartate. ATP is bound at residue 540 to 543 (GLDR).

This sequence belongs to the class-II aminoacyl-tRNA synthetase family. Type 1 subfamily. Homodimer.

It localises to the cytoplasm. The catalysed reaction is tRNA(Asx) + L-aspartate + ATP = L-aspartyl-tRNA(Asx) + AMP + diphosphate. In terms of biological role, aspartyl-tRNA synthetase with relaxed tRNA specificity since it is able to aspartylate not only its cognate tRNA(Asp) but also tRNA(Asn). Reaction proceeds in two steps: L-aspartate is first activated by ATP to form Asp-AMP and then transferred to the acceptor end of tRNA(Asp/Asn). The polypeptide is Aspartate--tRNA(Asp/Asn) ligase (Trichodesmium erythraeum (strain IMS101)).